A 191-amino-acid chain; its full sequence is Probable nicotinate-nucleotide adenylyltransferase (191 aa).

Belongs to the NadD family.

It catalyses the reaction nicotinate beta-D-ribonucleotide + ATP + H(+) = deamido-NAD(+) + diphosphate. The protein operates within cofactor biosynthesis; NAD(+) biosynthesis; deamido-NAD(+) from nicotinate D-ribonucleotide: step 1/1. Its function is as follows. Catalyzes the reversible adenylation of nicotinate mononucleotide (NaMN) to nicotinic acid adenine dinucleotide (NaAD). This chain is Probable nicotinate-nucleotide adenylyltransferase, found in Oceanobacillus iheyensis (strain DSM 14371 / CIP 107618 / JCM 11309 / KCTC 3954 / HTE831).